Reading from the N-terminus, the 63-residue chain is Conotoxin Cal12.5 (63 aa).

Residues 1–21 (MKVTCVLVVLLLLLPYGDLLG) form the signal peptide.

It belongs to the conotoxin O1 superfamily. In terms of processing, contains 4 disulfide bonds. In terms of tissue distribution, expressed by the venom duct.

Its subcellular location is the secreted. Probable neurotoxin. The polypeptide is Conotoxin Cal12.5 (Californiconus californicus (California cone)).